We begin with the raw amino-acid sequence, 59 residues long: MAVQQNKKSPSKRGMHRAHDFLTDPPLAVEPTTGEVHLRHHISPSGVYRGKKVVKAKGE.

A disordered region spans residues 1–28; sequence MAVQQNKKSPSKRGMHRAHDFLTDPPLA.

This sequence belongs to the bacterial ribosomal protein bL32 family.

This chain is Large ribosomal subunit protein bL32, found in Aromatoleum aromaticum (strain DSM 19018 / LMG 30748 / EbN1) (Azoarcus sp. (strain EbN1)).